A 152-amino-acid chain; its full sequence is Large ribosomal subunit protein bL9 (152 aa).

Belongs to the bacterial ribosomal protein bL9 family.

Its function is as follows. Binds to the 23S rRNA. In Mycobacterium ulcerans (strain Agy99), this protein is Large ribosomal subunit protein bL9.